Consider the following 59-residue polypeptide: Large ribosomal subunit protein uL30 (59 aa).

Belongs to the universal ribosomal protein uL30 family. As to quaternary structure, part of the 50S ribosomal subunit.

The sequence is that of Large ribosomal subunit protein uL30 from Bacillus licheniformis (strain ATCC 14580 / DSM 13 / JCM 2505 / CCUG 7422 / NBRC 12200 / NCIMB 9375 / NCTC 10341 / NRRL NRS-1264 / Gibson 46).